The chain runs to 146 residues: Hemoglobin subunit beta (146 aa).

Val-1 carries the post-translational modification N-acetylvaline. The Globin domain occupies 2 to 146 (HLTGEEKSTV…VATALAHKYH (145 aa)). Residue Ser-44 is modified to Phosphoserine. Lys-59 carries the N6-acetyllysine modification. Residue His-63 coordinates heme b. At Lys-82 the chain carries N6-acetyllysine. A heme b-binding site is contributed by His-92. Cys-93 is modified (S-nitrosocysteine). Lys-144 carries the post-translational modification N6-acetyllysine.

It belongs to the globin family. As to quaternary structure, heterotetramer of two alpha chains and two beta chains. As to expression, red blood cells.

In terms of biological role, involved in oxygen transport from the lung to the various peripheral tissues. This Macrotus californicus (Californian leaf-nosed bat) protein is Hemoglobin subunit beta (HBB).